Consider the following 181-residue polypeptide: Inner membrane-spanning protein YciB (181 aa).

Helical transmembrane passes span 10–30 (LIIF…GALI), 50–70 (MQLI…ALHD), 80–100 (IVYV…KPAI), 120–140 (WAWV…AYHL), and 148–168 (FKVF…GGYI).

The protein belongs to the YciB family.

Its subcellular location is the cell inner membrane. Its function is as follows. Plays a role in cell envelope biogenesis, maintenance of cell envelope integrity and membrane homeostasis. The chain is Inner membrane-spanning protein YciB from Vibrio cholerae serotype O1 (strain ATCC 39541 / Classical Ogawa 395 / O395).